A 491-amino-acid polypeptide reads, in one-letter code: Ketol-acid reductoisomerase (NADP(+)) (491 aa).

The 194-residue stretch at 15–208 (AQLGKCRFMG…GGHRAGVLES (194 aa)) folds into the KARI N-terminal Rossmann domain. NADP(+) is bound by residues 45 to 48 (CGAQ), R68, R76, S78, and 108 to 110 (DKQ). Residue H132 is part of the active site. Position 158 (G158) interacts with NADP(+). 2 KARI C-terminal knotted domains span residues 209 to 344 (SFVA…TAPQ) and 345 to 484 (YEGK…MTDM). Positions 217, 221, 389, and 393 each coordinate Mg(2+). S414 provides a ligand contact to substrate.

Belongs to the ketol-acid reductoisomerase family. Mg(2+) serves as cofactor.

It catalyses the reaction (2R)-2,3-dihydroxy-3-methylbutanoate + NADP(+) = (2S)-2-acetolactate + NADPH + H(+). The enzyme catalyses (2R,3R)-2,3-dihydroxy-3-methylpentanoate + NADP(+) = (S)-2-ethyl-2-hydroxy-3-oxobutanoate + NADPH + H(+). The protein operates within amino-acid biosynthesis; L-isoleucine biosynthesis; L-isoleucine from 2-oxobutanoate: step 2/4. It functions in the pathway amino-acid biosynthesis; L-valine biosynthesis; L-valine from pyruvate: step 2/4. Involved in the biosynthesis of branched-chain amino acids (BCAA). Catalyzes an alkyl-migration followed by a ketol-acid reduction of (S)-2-acetolactate (S2AL) to yield (R)-2,3-dihydroxy-isovalerate. In the isomerase reaction, S2AL is rearranged via a Mg-dependent methyl migration to produce 3-hydroxy-3-methyl-2-ketobutyrate (HMKB). In the reductase reaction, this 2-ketoacid undergoes a metal-dependent reduction by NADPH to yield (R)-2,3-dihydroxy-isovalerate. This Escherichia coli O157:H7 protein is Ketol-acid reductoisomerase (NADP(+)).